The primary structure comprises 133 residues: Hydrogenase maturation factor HypA (133 aa).

Ni(2+) is bound at residue histidine 2. 4 residues coordinate Zn(2+): cysteine 73, cysteine 75, cysteine 105, and cysteine 108.

It belongs to the HypA/HybF family.

Functionally, involved in the maturation of [NiFe] hydrogenases. Required for nickel insertion into the metal center of the hydrogenase. This is Hydrogenase maturation factor HypA from Methanosarcina acetivorans (strain ATCC 35395 / DSM 2834 / JCM 12185 / C2A).